A 64-amino-acid chain; its full sequence is Large ribosomal subunit protein uL30 (64 aa).

It belongs to the universal ribosomal protein uL30 family. Part of the 50S ribosomal subunit.

The protein is Large ribosomal subunit protein uL30 of Bradyrhizobium diazoefficiens (strain JCM 10833 / BCRC 13528 / IAM 13628 / NBRC 14792 / USDA 110).